Reading from the N-terminus, the 255-residue chain is Triosephosphate isomerase (255 aa).

9–11 is a substrate binding site; that stretch reads NWK. The active-site Electrophile is the His-95. The active-site Proton acceptor is Glu-167. Substrate is bound by residues Gly-173, Ser-212, and 233–234; that span reads GG.

Belongs to the triosephosphate isomerase family. As to quaternary structure, homodimer.

Its subcellular location is the cytoplasm. The enzyme catalyses D-glyceraldehyde 3-phosphate = dihydroxyacetone phosphate. It participates in carbohydrate biosynthesis; gluconeogenesis. The protein operates within carbohydrate degradation; glycolysis; D-glyceraldehyde 3-phosphate from glycerone phosphate: step 1/1. In terms of biological role, involved in the gluconeogenesis. Catalyzes stereospecifically the conversion of dihydroxyacetone phosphate (DHAP) to D-glyceraldehyde-3-phosphate (G3P). In Yersinia pseudotuberculosis serotype O:1b (strain IP 31758), this protein is Triosephosphate isomerase.